The primary structure comprises 96 residues: Large ribosomal subunit protein bL27 (96 aa).

The propeptide occupies 1 to 9 (MLKFDIQHF). The disordered stretch occupies residues 1 to 33 (MLKFDIQHFAHKKGGGSTSNGRDSESKRLGAKR). Residues 22 to 33 (RDSESKRLGAKR) show a composition bias toward basic and acidic residues.

This sequence belongs to the bacterial ribosomal protein bL27 family. In terms of processing, the N-terminus is cleaved by ribosomal processing cysteine protease Prp.

The chain is Large ribosomal subunit protein bL27 from Listeria innocua serovar 6a (strain ATCC BAA-680 / CLIP 11262).